Reading from the N-terminus, the 305-residue chain is Undecaprenyl-diphosphatase (305 aa).

A run of 8 helical transmembrane segments spans residues 18–38 (GVTE…PALV), 55–75 (YLAF…VFFW), 103–123 (WLIV…EQLF), 130–150 (PVPA…GEVL), 187–207 (GVLI…RSGI), 225–245 (FSFL…IPEL), 246–266 (FGPL…ASFV), and 284–304 (LTPF…WLAL).

This sequence belongs to the UppP family.

It is found in the cell membrane. It carries out the reaction di-trans,octa-cis-undecaprenyl diphosphate + H2O = di-trans,octa-cis-undecaprenyl phosphate + phosphate + H(+). Functionally, catalyzes the dephosphorylation of undecaprenyl diphosphate (UPP). Confers resistance to bacitracin. This is Undecaprenyl-diphosphatase from Mycobacterium avium (strain 104).